The following is a 251-amino-acid chain: MLAKRIIPCLDIKDGQTVKGTNFVNLRQAGDPVELGRTYSEQGADELVFLDITASHEGRKTFTDLVKRVAANINIPFTVGGGINELSDVDRLLNAGADKVSINSSAIRNPDLVDKIAKHFGSQVCVVAIDAKQTETGWKCYLNGGRIETDKYLFDWAKEVNNRGAGEILFTSMNHDGVKNGYANEALSTLADLLTIPVIASGGAGCMEHFRDTFAKGKADAALAASVFHFGEIKIPELKQYLCEQGINVRL.

Residues aspartate 11 and aspartate 130 contribute to the active site.

It belongs to the HisA/HisF family. Heterodimer of HisH and HisF.

The protein localises to the cytoplasm. The enzyme catalyses 5-[(5-phospho-1-deoxy-D-ribulos-1-ylimino)methylamino]-1-(5-phospho-beta-D-ribosyl)imidazole-4-carboxamide + L-glutamine = D-erythro-1-(imidazol-4-yl)glycerol 3-phosphate + 5-amino-1-(5-phospho-beta-D-ribosyl)imidazole-4-carboxamide + L-glutamate + H(+). The protein operates within amino-acid biosynthesis; L-histidine biosynthesis; L-histidine from 5-phospho-alpha-D-ribose 1-diphosphate: step 5/9. In terms of biological role, IGPS catalyzes the conversion of PRFAR and glutamine to IGP, AICAR and glutamate. The HisF subunit catalyzes the cyclization activity that produces IGP and AICAR from PRFAR using the ammonia provided by the HisH subunit. This is Imidazole glycerol phosphate synthase subunit HisF from Phocaeicola vulgatus (strain ATCC 8482 / DSM 1447 / JCM 5826 / CCUG 4940 / NBRC 14291 / NCTC 11154) (Bacteroides vulgatus).